A 622-amino-acid polypeptide reads, in one-letter code: MARLVHLTAVLAASIRLAAAATINHDFNVTWVRANPDGAFERPVIGINGKWPIPTIECNLGDRIVINLNNQLGNQSTSLHFHGLFQNGTNHMDGPSGVTQCAVPPGSSVTYNFTVDQPGTYWYHSHNDGQYPDGLRGPLVVHDPEFPYKKEVDEEIVLTLSDWYHDEIQTLIPQFLSKTNPTGAEPVPNACLINDTQNITVSVQPGKTYHVRVINIGAFAGQYLWFEGHKMRIVEVDGVYTKDAEADMIYITAAQRVSFLLTTRNDTNANFPFMASMDKALFDKLPADLNYNSTGWLSYDKSKSYPDPALVDELNPFDDMTLEAYDGMELLPEPDQNVALDVIMKNLGDGVNYAFFGNITYKSPKVPTLYSVLSSGDKATDPAIYGEHTHPFVLKKNEIVQIVVNNLDEGRHPFHLHGHNFQAIYRSNESAGTWEDGGGAAGKTFPKVPMRRDTLLIYPNGNMVLRFKANNPGVWLFHCHIEWHVISGLVATFVEAPMDLQKSLAIPTDHLDACKAGNIPTEGNAAGNTKDLLDLSGQNTPPDPLPAGFTTRGIVALVFSCVTGILGICVVAWYGMSQPLEEATAAVATLVREAQVTGSGTSPNHDDGNAAATEAGVLRRRT.

A signal peptide spans 1 to 20 (MARLVHLTAVLAASIRLAAA). Topologically, residues 21 to 552 (ATINHDFNVT…DPLPAGFTTR (532 aa)) are extracellular. Asparagine 28 and asparagine 74 each carry an N-linked (GlcNAc...) asparagine glycan. Plastocyanin-like domains lie at 29-144 (VTWV…VHDP) and 154-301 (EEIV…SYDK). Residues histidine 80 and histidine 82 each contribute to the Cu cation site. 2 N-linked (GlcNAc...) asparagine glycosylation sites follow: asparagine 87 and asparagine 112. Cu cation contacts are provided by histidine 124 and histidine 126. N-linked (GlcNAc...) asparagine glycosylation is found at asparagine 194, asparagine 198, asparagine 265, asparagine 292, and asparagine 358. The Plastocyanin-like 3 domain maps to 362 to 497 (KSPKVPTLYS…GLVATFVEAP (136 aa)). Residues histidine 412, histidine 415, and histidine 417 each contribute to the Cu cation site. Asparagine 428 is a glycosylation site (N-linked (GlcNAc...) asparagine). The Cu cation site is built by histidine 478, cysteine 479, histidine 480, and histidine 484. A helical transmembrane segment spans residues 553–573 (GIVALVFSCVTGILGICVVAW). Over 574-622 (YGMSQPLEEATAAVATLVREAQVTGSGTSPNHDDGNAAATEAGVLRRRT) the chain is Cytoplasmic. A disordered region spans residues 597–622 (TGSGTSPNHDDGNAAATEAGVLRRRT).

This sequence belongs to the multicopper oxidase family.

It is found in the cell membrane. In terms of biological role, cell surface ferroxidase; part of the reductive iron assimilatory system (RIA), a siderophore-independent high affinity iron uptake mechanism. Required to oxidize Fe(2+) and release it from the transporter. In Epichloe festucae (strain E2368), this protein is Iron transport multicopper oxidase fetC.